The chain runs to 159 residues: Crossover junction endodeoxyribonuclease RuvC (159 aa).

Residues Asp-7, Glu-67, and Asp-139 contribute to the active site. Asp-7, Glu-67, and Asp-139 together coordinate Mg(2+).

This sequence belongs to the RuvC family. Homodimer which binds Holliday junction (HJ) DNA. The HJ becomes 2-fold symmetrical on binding to RuvC with unstacked arms; it has a different conformation from HJ DNA in complex with RuvA. In the full resolvosome a probable DNA-RuvA(4)-RuvB(12)-RuvC(2) complex forms which resolves the HJ. The cofactor is Mg(2+).

The protein localises to the cytoplasm. It carries out the reaction Endonucleolytic cleavage at a junction such as a reciprocal single-stranded crossover between two homologous DNA duplexes (Holliday junction).. Its function is as follows. The RuvA-RuvB-RuvC complex processes Holliday junction (HJ) DNA during genetic recombination and DNA repair. Endonuclease that resolves HJ intermediates. Cleaves cruciform DNA by making single-stranded nicks across the HJ at symmetrical positions within the homologous arms, yielding a 5'-phosphate and a 3'-hydroxyl group; requires a central core of homology in the junction. The consensus cleavage sequence is 5'-(A/T)TT(C/G)-3'. Cleavage occurs on the 3'-side of the TT dinucleotide at the point of strand exchange. HJ branch migration catalyzed by RuvA-RuvB allows RuvC to scan DNA until it finds its consensus sequence, where it cleaves and resolves the cruciform DNA. This Orientia tsutsugamushi (strain Boryong) (Rickettsia tsutsugamushi) protein is Crossover junction endodeoxyribonuclease RuvC.